A 385-amino-acid polypeptide reads, in one-letter code: Protein pelota homolog (385 aa).

Residue lysine 162 forms a Glycyl lysine isopeptide (Lys-Gly) (interchain with G-Cter in SUMO2) linkage. Phosphoserine is present on residues serine 374, serine 380, serine 381, and serine 382.

This sequence belongs to the eukaryotic release factor 1 family. Pelota subfamily. Component of the Pelota-HBS1L complex, also named Dom34-Hbs1 complex, composed of PELO and HBS1L. Interacts with PINK1. Interacts with ABCE1. Interacts with CNOT4. It depends on a divalent metal cation as a cofactor. As to expression, ubiquitously expressed.

The protein localises to the cytoplasm. In terms of biological role, component of the Pelota-HBS1L complex, a complex that recognizes stalled ribosomes and triggers the No-Go Decay (NGD) pathway. In the Pelota-HBS1L complex, PELO recognizes ribosomes stalled at the 3' end of an mRNA and engages stalled ribosomes by destabilizing mRNA in the mRNA channel. Following mRNA extraction from stalled ribosomes by the SKI complex, the Pelota-HBS1L complex promotes recruitment of ABCE1, which drives the disassembly of stalled ribosomes, followed by degradation of damaged mRNAs as part of the NGD pathway. As part of the PINK1-regulated signaling, upon mitochondrial damage is recruited to the ribosome/mRNA-ribonucleoprotein complex associated to mitochondrial outer membrane thereby enabling the recruitment of autophagy receptors and induction of mitophagy. The chain is Protein pelota homolog from Homo sapiens (Human).